A 99-amino-acid polypeptide reads, in one-letter code: MALALSDVKRIAHLARIEISDDEAAQTLAQLNNFFSLVEQMQAVDTSGIEPLAHPLSAVRDMVQRLREDVVTESDRRADYQRPAPATEDGLYLVPKVIE.

The protein belongs to the GatC family. Heterotrimer of A, B and C subunits.

It catalyses the reaction L-glutamyl-tRNA(Gln) + L-glutamine + ATP + H2O = L-glutaminyl-tRNA(Gln) + L-glutamate + ADP + phosphate + H(+). It carries out the reaction L-aspartyl-tRNA(Asn) + L-glutamine + ATP + H2O = L-asparaginyl-tRNA(Asn) + L-glutamate + ADP + phosphate + 2 H(+). Its function is as follows. Allows the formation of correctly charged Asn-tRNA(Asn) or Gln-tRNA(Gln) through the transamidation of misacylated Asp-tRNA(Asn) or Glu-tRNA(Gln) in organisms which lack either or both of asparaginyl-tRNA or glutaminyl-tRNA synthetases. The reaction takes place in the presence of glutamine and ATP through an activated phospho-Asp-tRNA(Asn) or phospho-Glu-tRNA(Gln). This Cupriavidus necator (strain ATCC 17699 / DSM 428 / KCTC 22496 / NCIMB 10442 / H16 / Stanier 337) (Ralstonia eutropha) protein is Aspartyl/glutamyl-tRNA(Asn/Gln) amidotransferase subunit C.